Reading from the N-terminus, the 288-residue chain is Putative movement protein (288 aa).

Residues Thr-207–Gly-288 form a disordered region.

In terms of biological role, transports viral genome to neighboring plant cells directly through plasmosdesmata, without any budding. The movement protein allows efficient cell to cell propagation, by bypassing the host cell wall barrier (Potential). This chain is Putative movement protein, found in Cucumis melo (Muskmelon).